Here is a 159-residue protein sequence, read N- to C-terminus: MNVVQGNIEAKNAKVAIVVSRFNSFLVESLLDGAIDTLKRFGQVADENITVVRVPGAVELPLAARRVAASGKFDGIIALGAVIRGGTPHFDFVAGECNKGLAQVALEFDLPVSFGVLTTDTIEQAIERSGTKAGNKGGEAALGLLEMVNVLQQLEQQLS.

Residues Phe22, 57–59, and 81–83 each bind 5-amino-6-(D-ribitylamino)uracil; these read AVE and AVI. Position 86-87 (86-87) interacts with (2S)-2-hydroxy-3-oxobutyl phosphate; that stretch reads GT. The active-site Proton donor is His89. Phe114 provides a ligand contact to 5-amino-6-(D-ribitylamino)uracil. Arg128 serves as a coordination point for (2S)-2-hydroxy-3-oxobutyl phosphate.

This sequence belongs to the DMRL synthase family. As to quaternary structure, forms an icosahedral capsid composed of 60 subunits, arranged as a dodecamer of pentamers.

It carries out the reaction (2S)-2-hydroxy-3-oxobutyl phosphate + 5-amino-6-(D-ribitylamino)uracil = 6,7-dimethyl-8-(1-D-ribityl)lumazine + phosphate + 2 H2O + H(+). It participates in cofactor biosynthesis; riboflavin biosynthesis; riboflavin from 2-hydroxy-3-oxobutyl phosphate and 5-amino-6-(D-ribitylamino)uracil: step 1/2. Functionally, catalyzes the formation of 6,7-dimethyl-8-ribityllumazine by condensation of 5-amino-6-(D-ribitylamino)uracil with 3,4-dihydroxy-2-butanone 4-phosphate. This is the penultimate step in the biosynthesis of riboflavin. This chain is 6,7-dimethyl-8-ribityllumazine synthase, found in Shewanella denitrificans (strain OS217 / ATCC BAA-1090 / DSM 15013).